We begin with the raw amino-acid sequence, 184 residues long: Thylakoid membrane protein slr0575 (184 aa).

The next 2 helical transmembrane spans lie at 5–25 and 31–51; these read ISLA…GFVA and ATLN…GLAL.

The protein resides in the cellular thylakoid membrane. The sequence is that of Thylakoid membrane protein slr0575 from Synechocystis sp. (strain ATCC 27184 / PCC 6803 / Kazusa).